The following is a 365-amino-acid chain: MRRVILTTGGTGGHIFPALAVAEEIRARYPECSVLFMGGLYGPEADLAARAGLDFVGLPVRGVLGRGVRAIGAAFGMAAGIARAYAVMGRFDPDIVLGFGGYAAFAGVLAARLRGRPAAIHEQNSVPGLTNRVLSRVVPRVFLSLPDTLGAFPPQKTCLAGNPVRASIVACGAERSDPRPDHVRRLLVMGGSLGARAINDAVVSSLPALAEAGVEVWHQTGAADWERIRKAYAETGHGEGRVEAFIDDVASAYAWADLVLCRAGATSVAELAVAGKPAVLVPYPFATHDHQTHNARWLVSRGAAVLLEQKDISMTDVPALLVGLLSDRARLNRMAVSARAQGRPDAAAAVVDGLVELLKTTPRAR.

Residues 11–13 (TGG), asparagine 124, arginine 165, serine 192, isoleucine 246, and glutamine 291 each bind UDP-N-acetyl-alpha-D-glucosamine.

The protein belongs to the glycosyltransferase 28 family. MurG subfamily.

Its subcellular location is the cell inner membrane. The enzyme catalyses di-trans,octa-cis-undecaprenyl diphospho-N-acetyl-alpha-D-muramoyl-L-alanyl-D-glutamyl-meso-2,6-diaminopimeloyl-D-alanyl-D-alanine + UDP-N-acetyl-alpha-D-glucosamine = di-trans,octa-cis-undecaprenyl diphospho-[N-acetyl-alpha-D-glucosaminyl-(1-&gt;4)]-N-acetyl-alpha-D-muramoyl-L-alanyl-D-glutamyl-meso-2,6-diaminopimeloyl-D-alanyl-D-alanine + UDP + H(+). Its pathway is cell wall biogenesis; peptidoglycan biosynthesis. In terms of biological role, cell wall formation. Catalyzes the transfer of a GlcNAc subunit on undecaprenyl-pyrophosphoryl-MurNAc-pentapeptide (lipid intermediate I) to form undecaprenyl-pyrophosphoryl-MurNAc-(pentapeptide)GlcNAc (lipid intermediate II). In Nitratidesulfovibrio vulgaris (strain ATCC 29579 / DSM 644 / CCUG 34227 / NCIMB 8303 / VKM B-1760 / Hildenborough) (Desulfovibrio vulgaris), this protein is UDP-N-acetylglucosamine--N-acetylmuramyl-(pentapeptide) pyrophosphoryl-undecaprenol N-acetylglucosamine transferase.